The following is a 198-amino-acid chain: Imidazoleglycerol-phosphate dehydratase (198 aa).

Belongs to the imidazoleglycerol-phosphate dehydratase family.

Its subcellular location is the cytoplasm. The enzyme catalyses D-erythro-1-(imidazol-4-yl)glycerol 3-phosphate = 3-(imidazol-4-yl)-2-oxopropyl phosphate + H2O. The protein operates within amino-acid biosynthesis; L-histidine biosynthesis; L-histidine from 5-phospho-alpha-D-ribose 1-diphosphate: step 6/9. In Methylobacillus flagellatus (strain ATCC 51484 / DSM 6875 / VKM B-1610 / KT), this protein is Imidazoleglycerol-phosphate dehydratase.